Here is a 146-residue protein sequence, read N- to C-terminus: MATALKKNRKKRGHVSAGHGRIGKHRKHPGGRGNAGGMHHHRILFDKYHPGYFGKVGMRYFHKLRNKFFCPIVNLDKLWSLVPEDVKAKSSKDNVPLIDVTQHGFFKVLGKGHLPENKPFVVKAKLISKTAEKKIKEAGGAVVLTA.

2 stretches are compositionally biased toward basic residues: residues 1-14 (MATA…KRGH) and 21-30 (RIGKHRKHPG). The disordered stretch occupies residues 1–38 (MATALKKNRKKRGHVSAGHGRIGKHRKHPGGRGNAGGM).

This sequence belongs to the universal ribosomal protein uL15 family.

The chain is Large ribosomal subunit protein uL15y (RPL27AB) from Arabidopsis thaliana (Mouse-ear cress).